The chain runs to 663 residues: General transcription and DNA repair factor IIH subunit tcf-29 (663 aa).

BSD domains lie at 147-206 (WFED…RAYA) and 227-278 (ENGE…LSKK). Disordered regions lie at residues 452–491 (DSDG…QHVG) and 513–535 (HLTT…EERP). The segment covering 453–465 (SDGRGGIDLHRSI) has biased composition (basic and acidic residues). Over residues 515 to 528 (TTTTTHGGSHTTTT) the composition is skewed to low complexity.

The protein belongs to the TFB1 family. As to quaternary structure, component of the 7-subunit TFIIH core complex composed of XPB/rad25, XPD/dnr-10, tcf-30/SSL1, tcf-29/TFB1, tcf-11/TFB2, tcf-14/TFB4 and rtf-1/TFB5, which is active in NER. The core complex associates with the 3-subunit CTD-kinase module TFIIK composed of div-66/cyclin H, prk-3/KIN28 and rtf-2/TFB3 to form the 10-subunit holoenzyme (holo-TFIIH) active in transcription.

It is found in the nucleus. Functionally, component of the general transcription and DNA repair factor IIH (TFIIH) core complex, which is involved in general and transcription-coupled nucleotide excision repair (NER) of damaged DNA and, when complexed to TFIIK, in RNA transcription by RNA polymerase II. In NER, TFIIH acts by opening DNA around the lesion to allow the excision of the damaged oligonucleotide and its replacement by a new DNA fragment. In transcription, TFIIH has an essential role in transcription initiation. When the pre-initiation complex (PIC) has been established, TFIIH is required for promoter opening and promoter escape. Phosphorylation of the C-terminal tail (CTD) of the largest subunit of RNA polymerase II by the kinase module TFIIK controls the initiation of transcription. This is General transcription and DNA repair factor IIH subunit tcf-29 (tcf-29) from Neurospora crassa (strain ATCC 24698 / 74-OR23-1A / CBS 708.71 / DSM 1257 / FGSC 987).